The following is an 867-amino-acid chain: Leucine--tRNA ligase (867 aa).

The 'HIGH' region signature appears at 57 to 67; the sequence is PYPSGTLHMGH. The interval 308–327 is disordered; that stretch reads SQDERTSDDQPKRGVPTGAV. Over residues 309 to 319 the composition is skewed to basic and acidic residues; it reads QDERTSDDQPK. A 'KMSKS' region motif is present at residues 631-635; sequence KMSKS. Residue lysine 634 coordinates ATP.

It belongs to the class-I aminoacyl-tRNA synthetase family.

It localises to the cytoplasm. It catalyses the reaction tRNA(Leu) + L-leucine + ATP = L-leucyl-tRNA(Leu) + AMP + diphosphate. This is Leucine--tRNA ligase from Synechococcus sp. (strain CC9311).